We begin with the raw amino-acid sequence, 633 residues long: Phosphomethylpyrimidine synthase (633 aa).

Residues N245, M274, Y303, H339, 359–361, 400–403, and E439 contribute to the substrate site; these read SRG and DGLR. H443 contributes to the Zn(2+) binding site. Y466 lines the substrate pocket. H507 contacts Zn(2+). 3 residues coordinate [4Fe-4S] cluster: C587, C590, and C595.

It belongs to the ThiC family. In terms of assembly, homodimer. The cofactor is [4Fe-4S] cluster.

It carries out the reaction 5-amino-1-(5-phospho-beta-D-ribosyl)imidazole + S-adenosyl-L-methionine = 4-amino-2-methyl-5-(phosphooxymethyl)pyrimidine + CO + 5'-deoxyadenosine + formate + L-methionine + 3 H(+). It functions in the pathway cofactor biosynthesis; thiamine diphosphate biosynthesis. Functionally, catalyzes the synthesis of the hydroxymethylpyrimidine phosphate (HMP-P) moiety of thiamine from aminoimidazole ribotide (AIR) in a radical S-adenosyl-L-methionine (SAM)-dependent reaction. This chain is Phosphomethylpyrimidine synthase, found in Neisseria meningitidis serogroup C (strain 053442).